Reading from the N-terminus, the 624-residue chain is Heat shock factor protein 5 (624 aa).

The DNA-binding element occupies 11-228 (NPNNFPAKLW…FHRSFRRDNL (218 aa)). Disordered regions lie at residues 52-77 (LSPPGPGAGGAGGAGSSGGGGGSGVG), 112-138 (GAAGPGPGPGAGGPAGDGPLHHFHSPH), 186-214 (SASASTSPLQHQDPPPQPAGPRPEQHGPV), 429-461 (CPSSQANRGQHILPNANSSNPSSTSQASQLEPL), and 572-605 (GPANKSTKDTGLSTPARYRERRSNSQGKSPDLHL). Composition is skewed to gly residues over residues 58 to 77 (GAGGAGGAGSSGGGGGSGVG) and 112 to 127 (GAAGPGPGPGAGGPAG). 2 stretches are compositionally biased toward low complexity: residues 186 to 197 (SASASTSPLQHQ) and 442 to 457 (PNANSSNPSSTSQASQ). At Ser600 the chain carries Phosphoserine.

This sequence belongs to the HSF family. Homooligomer. As to expression, highly expressed in testis particularly in spermatocytes (at protein level). Not expressed in fetal testis and ovary.

It localises to the nucleus. Its subcellular location is the chromosome. In terms of biological role, DNA-binding transcription factor that is essential for male fertility, spermatogenesis and meiotic prophase progression in spermatocytes under non-stress conditions. Positvely and negatively regulates gene expression to ensure progression of meiotic prophase beyond pachytene stage in spermatocytes. Plays a role in male germline meiotic sex chromosome remodeling and silencing through regulation of SMARCA4. The chain is Heat shock factor protein 5 (Hsf5) from Mus musculus (Mouse).